Reading from the N-terminus, the 494-residue chain is Glycogen synthase (494 aa).

Lys-24 serves as a coordination point for ADP-alpha-D-glucose.

This sequence belongs to the glycosyltransferase 1 family. Bacterial/plant glycogen synthase subfamily.

The enzyme catalyses [(1-&gt;4)-alpha-D-glucosyl](n) + ADP-alpha-D-glucose = [(1-&gt;4)-alpha-D-glucosyl](n+1) + ADP + H(+). The protein operates within glycan biosynthesis; glycogen biosynthesis. Functionally, synthesizes alpha-1,4-glucan chains using ADP-glucose. The polypeptide is Glycogen synthase (Aromatoleum aromaticum (strain DSM 19018 / LMG 30748 / EbN1) (Azoarcus sp. (strain EbN1))).